The primary structure comprises 380 residues: Shedu protein SduA (380 aa).

Functionally, only component of antiviral defense system Shedu. Expression of Shedu in B.subtilis (strain BEST7003) confers resistance to phages phi105, phi29, rho14 and to a lesser extent to SPP1. May be an endonuclease. The polypeptide is Shedu protein SduA (Bacillus cereus (strain B4264)).